We begin with the raw amino-acid sequence, 425 residues long: Actin-related protein 3 (425 aa).

Belongs to the actin family. ARP3 subfamily. As to quaternary structure, component of the Arp2/3 complex, at least composed of arx-1, arx-2, arx-4 and arx-6.

Its subcellular location is the cytoplasm. It localises to the cytoskeleton. Functions as ATP-binding component of the Arp2/3 complex which is involved in regulation of actin polymerization and together with an activating nucleation-promoting factor (NPF) mediates the formation of branched actin networks. Seems to contact the pointed end of the daughter actin filament. Plays a role in time-dependent memory loss and the retention of conditioned behavior over time. The polypeptide is Actin-related protein 3 (Caenorhabditis elegans).